A 437-amino-acid polypeptide reads, in one-letter code: Enolase 1 (437 aa).

K60 is covalently cross-linked (Glycyl lysine isopeptide (Lys-Gly) (interchain with G-Cter in ubiquitin)). S119 and S138 each carry phosphoserine. Substrate-binding residues include H160 and E169. S188 carries the post-translational modification Phosphoserine. E212 (proton donor) is an active-site residue. A Glycyl lysine isopeptide (Lys-Gly) (interchain with G-Cter in ubiquitin) cross-link involves residue K243. D247 and E296 together coordinate Mg(2+). Residue E296 participates in substrate binding. T313 carries the post-translational modification Phosphothreonine. D321 lines the substrate pocket. D321 is a binding site for Mg(2+). T324 bears the Phosphothreonine mark. K346 acts as the Proton acceptor in catalysis. A Glycyl lysine isopeptide (Lys-Gly) (interchain with G-Cter in ubiquitin) cross-link involves residue K358. Substrate contacts are provided by residues 373 to 376 and K397; that span reads SHRS.

It belongs to the enolase family. As to quaternary structure, homodimer. Requires Mg(2+) as cofactor.

It localises to the cytoplasm. It catalyses the reaction (2R)-2-phosphoglycerate = phosphoenolpyruvate + H2O. It participates in carbohydrate degradation; glycolysis; pyruvate from D-glyceraldehyde 3-phosphate: step 4/5. The protein is Enolase 1 (ENO1) of Saccharomyces cerevisiae (strain ATCC 204508 / S288c) (Baker's yeast).